The primary structure comprises 619 residues: Eukaryotic translation initiation factor 3 subunit D (619 aa).

Residues 99–160 (QKQPHQRGRF…KWGARPPPKI (62 aa)) are disordered. Residues 100–121 (KQPHQRGRFRGNLRNQRGRGRG) are compositionally biased toward basic residues. Residues 288 to 302 (EFDLLTVNETAIEPP) form an RNA gate region. Residues 588–619 (TPAATETVATATTEATTPTTATKTTAPAAAQK) are disordered.

Belongs to the eIF-3 subunit D family. In terms of assembly, component of the eukaryotic translation initiation factor 3 (eIF-3) complex.

It localises to the cytoplasm. MRNA cap-binding component of the eukaryotic translation initiation factor 3 (eIF-3) complex, which is involved in protein synthesis of a specialized repertoire of mRNAs and, together with other initiation factors, stimulates binding of mRNA and methionyl-tRNAi to the 40S ribosome. The eIF-3 complex specifically targets and initiates translation of a subset of mRNAs involved in cell proliferation. In the eIF-3 complex, eif3d specifically recognizes and binds the 7-methylguanosine cap of a subset of mRNAs. This is Eukaryotic translation initiation factor 3 subunit D from Aedes aegypti (Yellowfever mosquito).